Reading from the N-terminus, the 291-residue chain is MSVSANLVKQLRERTGSGMMECKKALVEVDGDLEAAAELMRKKGLAKADKKADRVAAEGRVVAARSEDGKSGVLVEVNSETDFVGNGDEFRAFAESVAQRALDSKVEDLDSLLASEVDGKSVETLRQEMVAQLGENIEVRRFIRYAGDHQVAQYLHGARIGVMVEVQGGDEQLGRDLAMHIAASSPVCVSPDDVPADQLSSEKEVLLAQARESGKPEEIVEKMVEGRLKKHLSEITLLGQPFVKDPDQTVGDLLKAKGAEVTRFARYEVGEGKEKKDESFADEVMAQVRDS.

Residues 81-84 (TDFV) are involved in Mg(2+) ion dislocation from EF-Tu. Residues 271 to 291 (EGKEKKDESFADEVMAQVRDS) are disordered.

It belongs to the EF-Ts family.

It localises to the cytoplasm. Its function is as follows. Associates with the EF-Tu.GDP complex and induces the exchange of GDP to GTP. It remains bound to the aminoacyl-tRNA.EF-Tu.GTP complex up to the GTP hydrolysis stage on the ribosome. This chain is Elongation factor Ts, found in Halorhodospira halophila (strain DSM 244 / SL1) (Ectothiorhodospira halophila (strain DSM 244 / SL1)).